Here is a 403-residue protein sequence, read N- to C-terminus: MFPGSGHNTYGGYPPPQGPPPNNNGYNSGPNNSYRQQGYSRPQGPPPGQYDQQSQYSQQSQPSAPPQGGTGYGDQSQWGRPTGPPPSGSQSFGQNSGYTFQYSNCSGRKKALLVGVNYFGSPNELRGCINDVKNMSSFLVDHWGYQWNDIVILTDDQNDISRVPTKNNIIRAMQWLVKDARPNDSLVFHYSGHGGTTADTDGDEESGYDDVIYPVDFQQAGHIVDDDMHAIMVRPLPPGCRLTALYDSCHSGTALDLPYVYSTKGVVKEPNLLKDAGSDALNAFISYERGNIGGAISSLTGLVKKVARQGSTNQDQVRQAKFSAADVISISGCKDDQTSADAKENGRATGAMSWSFIKVLNELPNQSYLSLLNNMRTILAAKYSQKPQLSCSHPQDMNIQFIM.

Residues 1–95 are disordered; it reads MFPGSGHNTY…PSGSQSFGQN (95 aa). Over residues 13 to 22 the composition is skewed to pro residues; sequence YPPPQGPPPN. Composition is skewed to low complexity over residues 23–34 and 49–62; these read NNGYNSGPNNSY and QYDQ…QSQP. Active-site residues include H193 and C249.

This sequence belongs to the peptidase C14B family.

In terms of biological role, involved in cell death (apoptosis). This chain is Metacaspase-1 (MCA1), found in Scheffersomyces stipitis (strain ATCC 58785 / CBS 6054 / NBRC 10063 / NRRL Y-11545) (Yeast).